A 236-amino-acid chain; its full sequence is 2,3,4,5-tetrahydropyridine-2,6-dicarboxylate N-acetyltransferase (236 aa).

Belongs to the transferase hexapeptide repeat family. DapH subfamily.

It catalyses the reaction (S)-2,3,4,5-tetrahydrodipicolinate + acetyl-CoA + H2O = L-2-acetamido-6-oxoheptanedioate + CoA. Its pathway is amino-acid biosynthesis; L-lysine biosynthesis via DAP pathway; LL-2,6-diaminopimelate from (S)-tetrahydrodipicolinate (acetylase route): step 1/3. In terms of biological role, catalyzes the transfer of an acetyl group from acetyl-CoA to tetrahydrodipicolinate. The polypeptide is 2,3,4,5-tetrahydropyridine-2,6-dicarboxylate N-acetyltransferase (Clostridium botulinum (strain Kyoto / Type A2)).